The chain runs to 183 residues: MGLEIVIKDIQEGARAEVSRINTEADAKASEITNEAKEVQKKMLGDSLAKVEEDLQKLHQQVISSANLEVKRITLNKRKELLDNVYSQTVESIKSMPASKNEKLLKHIIDKYEASGDKIYSSKASEETVRKLSSLTYAGNIDCIGGVVLENEDGTVRLDYTYDSILKNVYERSLKQISDILYG.

The protein belongs to the V-ATPase E subunit family. In terms of assembly, has multiple subunits with at least A(3), B(3), C, D, E, F, H, I and proteolipid K(x).

Its subcellular location is the cell membrane. Its function is as follows. Component of the A-type ATP synthase that produces ATP from ADP in the presence of a proton gradient across the membrane. The polypeptide is A-type ATP synthase subunit E (Methanosarcina acetivorans (strain ATCC 35395 / DSM 2834 / JCM 12185 / C2A)).